The sequence spans 95 residues: DNA-directed RNA polymerase subunit Rpo11 (95 aa).

The protein belongs to the archaeal Rpo11/eukaryotic RPB11/RPC19 RNA polymerase subunit family. As to quaternary structure, part of the RNA polymerase complex.

It localises to the cytoplasm. The enzyme catalyses RNA(n) + a ribonucleoside 5'-triphosphate = RNA(n+1) + diphosphate. In terms of biological role, DNA-dependent RNA polymerase (RNAP) catalyzes the transcription of DNA into RNA using the four ribonucleoside triphosphates as substrates. The polypeptide is DNA-directed RNA polymerase subunit Rpo11 (Thermococcus sibiricus (strain DSM 12597 / MM 739)).